A 326-amino-acid chain; its full sequence is Tetraacyldisaccharide 4'-kinase (326 aa).

55 to 62 serves as a coordination point for ATP; the sequence is TVGGNGKT.

The protein belongs to the LpxK family.

It catalyses the reaction a lipid A disaccharide + ATP = a lipid IVA + ADP + H(+). It functions in the pathway glycolipid biosynthesis; lipid IV(A) biosynthesis; lipid IV(A) from (3R)-3-hydroxytetradecanoyl-[acyl-carrier-protein] and UDP-N-acetyl-alpha-D-glucosamine: step 6/6. In terms of biological role, transfers the gamma-phosphate of ATP to the 4'-position of a tetraacyldisaccharide 1-phosphate intermediate (termed DS-1-P) to form tetraacyldisaccharide 1,4'-bis-phosphate (lipid IVA). The protein is Tetraacyldisaccharide 4'-kinase of Tolumonas auensis (strain DSM 9187 / NBRC 110442 / TA 4).